Here is a 232-residue protein sequence, read N- to C-terminus: Ornithine carbamoyltransferase (232 aa).

Carbamoyl phosphate contacts are provided by residues glutamine 15, arginine 39, and 66-69 (HPTQ). Residues asparagine 99, aspartate 163, and 167 to 168 (SM) contribute to the L-ornithine site. Residues 204-207 (HCLP) and threonine 232 contribute to the carbamoyl phosphate site.

It belongs to the aspartate/ornithine carbamoyltransferase superfamily. OTCase family.

Its subcellular location is the cytoplasm. The catalysed reaction is carbamoyl phosphate + L-ornithine = L-citrulline + phosphate + H(+). It participates in amino-acid biosynthesis; L-arginine biosynthesis; L-arginine from L-ornithine and carbamoyl phosphate: step 1/3. Functionally, reversibly catalyzes the transfer of the carbamoyl group from carbamoyl phosphate (CP) to the N(epsilon) atom of ornithine (ORN) to produce L-citrulline. The chain is Ornithine carbamoyltransferase (argF) from Neisseria sicca.